A 475-amino-acid polypeptide reads, in one-letter code: Probable proline--tRNA ligase, mitochondrial (475 aa).

Residues 1 to 29 (MEGLLTRCRALPALATCSRQLSGYVPCRF) constitute a mitochondrion transit peptide.

This sequence belongs to the class-II aminoacyl-tRNA synthetase family.

It is found in the mitochondrion matrix. The catalysed reaction is tRNA(Pro) + L-proline + ATP = L-prolyl-tRNA(Pro) + AMP + diphosphate. Its function is as follows. Mitochondrial aminoacyl-tRNA synthetase that catalyzes the specific attachment of the proline amino acid (aa) to the homologous transfer RNA (tRNA), further participating in protein synthesis. The reaction occurs in a two steps: proline is first activated by ATP to form Pro-AMP and then transferred to the acceptor end of tRNA(Pro). In Homo sapiens (Human), this protein is Probable proline--tRNA ligase, mitochondrial.